The following is a 682-amino-acid chain: Potassium-transporting ATPase ATP-binding subunit (682 aa).

4 helical membrane passes run 34–54 (PVMF…IAMA), 62–82 (ALFS…ANFA), 219–239 (IALT…TATL), and 254–274 (VLVA…LSAI). The 4-aspartylphosphate intermediate role is filled by Asp307. Residues Asp344, Glu348, 377–384 (FTAQSRMS), and Lys395 contribute to the ATP site. Mg(2+)-binding residues include Asp518 and Asp522. The next 3 membrane-spanning stretches (helical) occupy residues 588 to 608 (FAII…LNIM), 616 to 636 (AILS…PLAL), and 656 to 676 (IYGL…DLLL).

The protein belongs to the cation transport ATPase (P-type) (TC 3.A.3) family. Type IA subfamily. The system is composed of three essential subunits: KdpA, KdpB and KdpC.

The protein localises to the cell inner membrane. The catalysed reaction is K(+)(out) + ATP + H2O = K(+)(in) + ADP + phosphate + H(+). Its function is as follows. Part of the high-affinity ATP-driven potassium transport (or Kdp) system, which catalyzes the hydrolysis of ATP coupled with the electrogenic transport of potassium into the cytoplasm. This subunit is responsible for energy coupling to the transport system and for the release of the potassium ions to the cytoplasm. The polypeptide is Potassium-transporting ATPase ATP-binding subunit (Escherichia coli O139:H28 (strain E24377A / ETEC)).